A 268-amino-acid polypeptide reads, in one-letter code: Protein DEEPER ROOTING 1 (268 aa).

Low complexity predominate over residues 11-21 (LNGKQGNKKPN). Residues 11-39 (LNGKQGNKKPNTVPITTHPAKQEPREEFS) are disordered. Residues 30-39 (AKQEPREEFS) are compositionally biased toward basic and acidic residues. The IGT motif signature appears at 44 to 50 (GLLAIGT). The interval 220 to 246 (SRAASMKKYLEDRQIPTKKESNTEDDT) is disordered. Positions 227–246 (KYLEDRQIPTKKESNTEDDT) are enriched in basic and acidic residues.

It belongs to the LAZY family. As to expression, expressed in roots.

Functionally, involved in the development of the root system architecture by influencing lateral root angles and primary root length. This Prunus persica (Peach) protein is Protein DEEPER ROOTING 1.